The following is a 394-amino-acid chain: 8-amino-7-oxononanoate synthase (394 aa).

R22 provides a ligand contact to substrate. Pyridoxal 5'-phosphate is bound at residue G113–Y114. A substrate-binding site is contributed by H138. Residues S184, H212, and T240 each coordinate pyridoxal 5'-phosphate. Position 243 is an N6-(pyridoxal phosphate)lysine (K243). T359 is a binding site for substrate.

The protein belongs to the class-II pyridoxal-phosphate-dependent aminotransferase family. BioF subfamily. As to quaternary structure, homodimer. It depends on pyridoxal 5'-phosphate as a cofactor.

It catalyses the reaction 6-carboxyhexanoyl-[ACP] + L-alanine + H(+) = (8S)-8-amino-7-oxononanoate + holo-[ACP] + CO2. Its pathway is cofactor biosynthesis; biotin biosynthesis. Its function is as follows. Catalyzes the decarboxylative condensation of pimeloyl-[acyl-carrier protein] and L-alanine to produce 8-amino-7-oxononanoate (AON), [acyl-carrier protein], and carbon dioxide. The chain is 8-amino-7-oxononanoate synthase from Janthinobacterium sp. (strain Marseille) (Minibacterium massiliensis).